A 359-amino-acid polypeptide reads, in one-letter code: Peptide chain release factor 1 (359 aa).

The residue at position 238 (Gln238) is an N5-methylglutamine.

Belongs to the prokaryotic/mitochondrial release factor family. In terms of processing, methylated by PrmC. Methylation increases the termination efficiency of RF1.

It localises to the cytoplasm. Functionally, peptide chain release factor 1 directs the termination of translation in response to the peptide chain termination codons UAG and UAA. This is Peptide chain release factor 1 from Mycoplasmopsis pulmonis (strain UAB CTIP) (Mycoplasma pulmonis).